A 41-amino-acid chain; its full sequence is Perlinhibin (41 aa).

Post-translationally, contains four disulfide bonds.

Binds to calcite crystals in the shell and inhibits further shell growth at the binding site. In Haliotis laevigata (Smooth Australian abalone), this protein is Perlinhibin.